The sequence spans 72 residues: Translation initiation factor IF-1 (72 aa).

Positions 1-72 constitute an S1-like domain; it reads MAKTDLLEVQ…ERGRIVFRHK (72 aa).

Belongs to the IF-1 family. Component of the 30S ribosomal translation pre-initiation complex which assembles on the 30S ribosome in the order IF-2 and IF-3, IF-1 and N-formylmethionyl-tRNA(fMet); mRNA recruitment can occur at any time during PIC assembly.

It is found in the cytoplasm. In terms of biological role, one of the essential components for the initiation of protein synthesis. Stabilizes the binding of IF-2 and IF-3 on the 30S subunit to which N-formylmethionyl-tRNA(fMet) subsequently binds. Helps modulate mRNA selection, yielding the 30S pre-initiation complex (PIC). Upon addition of the 50S ribosomal subunit IF-1, IF-2 and IF-3 are released leaving the mature 70S translation initiation complex. This chain is Translation initiation factor IF-1, found in Spiroplasma kunkelii.